The primary structure comprises 144 residues: Large ribosomal subunit protein uL16 (144 aa).

This sequence belongs to the universal ribosomal protein uL16 family. Part of the 50S ribosomal subunit.

Functionally, binds 23S rRNA and is also seen to make contacts with the A and possibly P site tRNAs. This Acidobacterium capsulatum (strain ATCC 51196 / DSM 11244 / BCRC 80197 / JCM 7670 / NBRC 15755 / NCIMB 13165 / 161) protein is Large ribosomal subunit protein uL16.